The sequence spans 205 residues: Polyamine-modulated factor 1 (205 aa).

The disordered stretch occupies residues 1-30; sequence MAEASSANLGSGCEEKRHEGSSSESVPPGT. The stretch at 141-193 forms a coiled coil; it reads FLQQRDTLRRHVQKQEAENQQLADAVLAGRRQVEELQLQVQAQQQAWQALHRE.

Component of the MIS12 complex composed of MIS12, DSN1, NSL1 and PMF1. Interacts with COPS7A. Interacts via its coiled-coil domain with the leucine-zipper domain of NFE2L2. The interaction with NFE2L2 is required for the transcriptional regulation of SSAT. In terms of tissue distribution, highest levels of expression in heart and skeletal muscle, with significant levels expressed in kidney and liver.

The protein resides in the nucleus. Its subcellular location is the chromosome. It localises to the centromere. The protein localises to the kinetochore. Functionally, part of the MIS12 complex which is required for normal chromosome alignment and segregation and kinetochore formation during mitosis. May act as a cotranscription partner of NFE2L2 involved in regulation of polyamine-induced transcription of SSAT. The protein is Polyamine-modulated factor 1 of Homo sapiens (Human).